We begin with the raw amino-acid sequence, 142 residues long: Protein archease (142 aa).

Residues Asp12, Asp141, and Ile142 each contribute to the Ca(2+) site.

It belongs to the archease family. In solution, exists as a monomer, trimer and hexamer. Oligomeric states form a tripartite complex with tRNA and PAB1947 methyltransferase.

Activates the tRNA-splicing ligase complex by facilitating the enzymatic turnover of catalytic subunit RtcB. Acts by promoting the guanylylation of RtcB, a key intermediate step in tRNA ligation. Can also alter the NTP specificity of RtcB such that ATP, dGTP or ITP is used efficiently. Chaperone or modulator of proteins involved in DNA or RNA processing. Protects the tRNA (cytosine-5-)-methyltransferase PAB1947 against aggregation and increases its specificity. This Pyrococcus abyssi (strain GE5 / Orsay) protein is Protein archease.